A 129-amino-acid chain; its full sequence is Small ribosomal subunit protein uS8 (129 aa).

This sequence belongs to the universal ribosomal protein uS8 family. In terms of assembly, part of the 30S ribosomal subunit.

Its function is as follows. One of the primary rRNA binding proteins, it binds directly to 16S rRNA central domain where it helps coordinate assembly of the platform of the 30S subunit. This is Small ribosomal subunit protein uS8 from Nanoarchaeum equitans (strain Kin4-M).